Reading from the N-terminus, the 96-residue chain is NADH-ubiquinone oxidoreductase chain 4L (96 aa).

Helical transmembrane passes span 1-21 (MELM…ALSL), 27-47 (MLAL…LVMF), and 61-81 (IILL…VVAI).

The protein belongs to the complex I subunit 4L family.

Its subcellular location is the mitochondrion membrane. The enzyme catalyses a ubiquinone + NADH + 5 H(+)(in) = a ubiquinol + NAD(+) + 4 H(+)(out). Its function is as follows. Core subunit of the mitochondrial membrane respiratory chain NADH dehydrogenase (Complex I) which catalyzes electron transfer from NADH through the respiratory chain, using ubiquinone as an electron acceptor. Part of the enzyme membrane arm which is embedded in the lipid bilayer and involved in proton translocation. This is NADH-ubiquinone oxidoreductase chain 4L (MT-ND4L) from Lycodon semicarinatus (Ryukyu odd-tooth snake).